We begin with the raw amino-acid sequence, 96 residues long: MRTLVILAAILLVALQAQAEPLQARTDEATAAQEQIPTDNPEVVVSLAWDESLAPKDSVPGLRKNMACYCRIPACLAGERRYGTCFYRRRVWAFCC.

An N-terminal signal peptide occupies residues Met-1 to Ala-19. The propeptide occupies Glu-20–Met-66. Disulfide bonds link Cys-68-Cys-96, Cys-70-Cys-85, and Cys-75-Cys-95.

It localises to the secreted. Its function is as follows. Has bacteriostatic activity against Gram-positive bacteria S.aureus and L.monocytogenes and Gram-negative bacterium E.coli and antifungal activity against C.neoformans. This chain is Neutrophil defensin 3, found in Macaca mulatta (Rhesus macaque).